Here is a 430-residue protein sequence, read N- to C-terminus: Adenylosuccinate synthetase (430 aa).

Residues 12-18 (GDEGKGK) and 40-42 (GHT) contribute to the GTP site. The active-site Proton acceptor is the Asp13. Mg(2+)-binding residues include Asp13 and Gly40. IMP-binding positions include 13–16 (DEGK), 38–41 (NAGH), Thr130, Arg144, Gln225, Thr240, and Arg304. His41 (proton donor) is an active-site residue. A substrate-binding site is contributed by 300–306 (ATTGRPR). Residues Arg306, 332–334 (KLD), and 414–416 (SIG) contribute to the GTP site.

The protein belongs to the adenylosuccinate synthetase family. In terms of assembly, homodimer. The cofactor is Mg(2+).

It is found in the cytoplasm. The enzyme catalyses IMP + L-aspartate + GTP = N(6)-(1,2-dicarboxyethyl)-AMP + GDP + phosphate + 2 H(+). It functions in the pathway purine metabolism; AMP biosynthesis via de novo pathway; AMP from IMP: step 1/2. Its function is as follows. Plays an important role in the de novo pathway of purine nucleotide biosynthesis. Catalyzes the first committed step in the biosynthesis of AMP from IMP. The protein is Adenylosuccinate synthetase of Geobacter metallireducens (strain ATCC 53774 / DSM 7210 / GS-15).